The primary structure comprises 274 residues: Penicillin-insensitive murein endopeptidase (274 aa).

An N-terminal signal peptide occupies residues 1-19; sequence MNKTAIALLALLASSASLA. 3 disulfide bridges follow: Cys44/Cys265, Cys187/Cys235, and Cys216/Cys223. Zn(2+)-binding residues include His110, His113, Asp120, Asp147, His150, and His211.

It belongs to the peptidase M74 family. As to quaternary structure, dimer. Requires Zn(2+) as cofactor.

The protein localises to the periplasm. Its function is as follows. Murein endopeptidase that cleaves the D-alanyl-meso-2,6-diamino-pimelyl amide bond that connects peptidoglycan strands. Likely plays a role in the removal of murein from the sacculus. The polypeptide is Penicillin-insensitive murein endopeptidase (Shigella sonnei (strain Ss046)).